The sequence spans 208 residues: Small ribosomal subunit protein uS4 (208 aa).

The segment at 29–48 is disordered; it reads MERRPYGPGQHGRARRKQDS. Residues 95 to 155 enclose the S4 RNA-binding domain; sequence QRLDALVLRA…ERSEKMVPFQ (61 aa).

The protein belongs to the universal ribosomal protein uS4 family. Part of the 30S ribosomal subunit. Contacts protein S5. The interaction surface between S4 and S5 is involved in control of translational fidelity.

Functionally, one of the primary rRNA binding proteins, it binds directly to 16S rRNA where it nucleates assembly of the body of the 30S subunit. With S5 and S12 plays an important role in translational accuracy. This is Small ribosomal subunit protein uS4 from Micrococcus luteus (strain ATCC 4698 / DSM 20030 / JCM 1464 / CCM 169 / CCUG 5858 / IAM 1056 / NBRC 3333 / NCIMB 9278 / NCTC 2665 / VKM Ac-2230) (Micrococcus lysodeikticus).